We begin with the raw amino-acid sequence, 87 residues long: Defensin-like protein 175 (87 aa).

Residues 1–23 (MAKATSSLVVPIIFLVIFALVEQ) form the signal peptide. 4 cysteine pairs are disulfide-bonded: Cys-27–Cys-66, Cys-36–Cys-55, Cys-39–Cys-60, and Cys-43–Cys-62.

Belongs to the DEFL family.

Its subcellular location is the secreted. The sequence is that of Defensin-like protein 175 from Arabidopsis thaliana (Mouse-ear cress).